The following is a 237-amino-acid chain: Large ribosomal subunit protein uL2 (237 aa).

Residues 1–11 (MGKRIISQNRG) show a composition bias toward polar residues. 2 disordered regions span residues 1–20 (MGKRIISQNRGKGTPTYRAP) and 201–237 (FGGGKHQHVGKPKTVSRNAPPGRKVGSIAARRTGVRR).

Belongs to the universal ribosomal protein uL2 family. As to quaternary structure, part of the 50S ribosomal subunit. Forms a bridge to the 30S subunit in the 70S ribosome.

Its function is as follows. One of the primary rRNA binding proteins. Required for association of the 30S and 50S subunits to form the 70S ribosome, for tRNA binding and peptide bond formation. It has been suggested to have peptidyltransferase activity; this is somewhat controversial. Makes several contacts with the 16S rRNA in the 70S ribosome. The chain is Large ribosomal subunit protein uL2 from Archaeoglobus fulgidus (strain ATCC 49558 / DSM 4304 / JCM 9628 / NBRC 100126 / VC-16).